Consider the following 158-residue polypeptide: Cyclic pyranopterin monophosphate synthase (158 aa).

Residues 74–76 and 112–113 contribute to the substrate site; these read MCH and ME. Residue Asp127 is part of the active site.

The protein belongs to the MoaC family. In terms of assembly, homohexamer; trimer of dimers.

It catalyses the reaction (8S)-3',8-cyclo-7,8-dihydroguanosine 5'-triphosphate = cyclic pyranopterin phosphate + diphosphate. It functions in the pathway cofactor biosynthesis; molybdopterin biosynthesis. Functionally, catalyzes the conversion of (8S)-3',8-cyclo-7,8-dihydroguanosine 5'-triphosphate to cyclic pyranopterin monophosphate (cPMP). The sequence is that of Cyclic pyranopterin monophosphate synthase from Helicobacter pylori (strain HPAG1).